Reading from the N-terminus, the 150-residue chain is Large ribosomal subunit protein uL13 (150 aa).

The protein belongs to the universal ribosomal protein uL13 family. As to quaternary structure, part of the 50S ribosomal subunit.

Functionally, this protein is one of the early assembly proteins of the 50S ribosomal subunit, although it is not seen to bind rRNA by itself. It is important during the early stages of 50S assembly. The chain is Large ribosomal subunit protein uL13 from Chlamydia trachomatis serovar A (strain ATCC VR-571B / DSM 19440 / HAR-13).